Reading from the N-terminus, the 61-residue chain is UPF0391 membrane protein Bpro_0066 (61 aa).

2 helical membrane passes run 5-25 (AIIF…GVAA) and 33-53 (ILFG…ALGV).

Belongs to the UPF0391 family.

The protein localises to the cell membrane. This Polaromonas sp. (strain JS666 / ATCC BAA-500) protein is UPF0391 membrane protein Bpro_0066.